The primary structure comprises 248 residues: Protein-lysine N-methyltransferase EFM5 (248 aa).

This sequence belongs to the class I-like SAM-binding methyltransferase superfamily. EFM5 family.

It localises to the cytoplasm. S-adenosyl-L-methionine-dependent protein-lysine N-methyltransferase that trimethylates elongation factor 1-alpha (TEF1 and TEF2) at 'Lys-79'. Required for replication of Brome mosaic virus (BMV). The polypeptide is Protein-lysine N-methyltransferase EFM5 (Saccharomyces cerevisiae (strain ATCC 204508 / S288c) (Baker's yeast)).